Here is a 214-residue protein sequence, read N- to C-terminus: Adenylate kinase (214 aa).

Residue 10–15 (GAGKGT) participates in ATP binding. Residues 30-59 (STGDMLRAAIKAGTELGKQAKTLMDAGQLV) form an NMP region. Residues Thr31, Arg36, 57-59 (QLV), 85-88 (GFPR), and Gln92 each bind AMP. The segment at 122-159 (GRRVHPASGRSYHVVYNPPKVEGKDDVTGEDLIIRADD) is LID. Residues Arg123 and 132 to 133 (SY) contribute to the ATP site. AMP is bound by residues Arg156 and Arg167. Gln200 lines the ATP pocket.

The protein belongs to the adenylate kinase family. As to quaternary structure, monomer.

Its subcellular location is the cytoplasm. It catalyses the reaction AMP + ATP = 2 ADP. It participates in purine metabolism; AMP biosynthesis via salvage pathway; AMP from ADP: step 1/1. Catalyzes the reversible transfer of the terminal phosphate group between ATP and AMP. Plays an important role in cellular energy homeostasis and in adenine nucleotide metabolism. In Actinobacillus succinogenes (strain ATCC 55618 / DSM 22257 / CCUG 43843 / 130Z), this protein is Adenylate kinase.